A 153-amino-acid chain; its full sequence is MRCPSCFHNGTRVLDSRPVDEGRSIRRRRECESCLNRFTTFERVEEPPLIVVKKEGTREEFNKEKILRGLIKACEKRPVSLKQLEEVTQNVERELRNLGISEVKSDMIGEIVMEALRDIDDVAYVRFASVYRQFKDLNVFIEELKDILQKERE.

A zinc finger lies at 3–34; the sequence is CPSCFHNGTRVLDSRPVDEGRSIRRRRECESC. Residues 49 to 139 form the ATP-cone domain; sequence LIVVKKEGTR…VYRQFKDLNV (91 aa).

Belongs to the NrdR family. Requires Zn(2+) as cofactor.

Its function is as follows. Negatively regulates transcription of bacterial ribonucleotide reductase nrd genes and operons by binding to NrdR-boxes. This chain is Transcriptional repressor NrdR, found in Bacillus cytotoxicus (strain DSM 22905 / CIP 110041 / 391-98 / NVH 391-98).